The sequence spans 119 residues: Large ribosomal subunit protein uL18 (119 aa).

This sequence belongs to the universal ribosomal protein uL18 family. In terms of assembly, part of the 50S ribosomal subunit; part of the 5S rRNA/L5/L18/L25 subcomplex. Contacts the 5S and 23S rRNAs.

Functionally, this is one of the proteins that bind and probably mediate the attachment of the 5S RNA into the large ribosomal subunit, where it forms part of the central protuberance. This Mycoplasmoides gallisepticum (strain R(low / passage 15 / clone 2)) (Mycoplasma gallisepticum) protein is Large ribosomal subunit protein uL18.